The sequence spans 112 residues: T cell receptor alpha variable 17 (112 aa).

Residues 1-21 form the signal peptide; it reads METLLGVSLVILWLQLARVNS. In terms of domain architecture, Ig-like spans 22 to 112; the sequence is QQGEEDPQAL…DTASYFCATD (91 aa). 2 N-linked (GlcNAc...) asparagine glycosylation sites follow: asparagine 38 and asparagine 42. Cysteines 43 and 109 form a disulfide.

As to quaternary structure, alpha-beta TR is a heterodimer composed of an alpha and beta chain; disulfide-linked. The alpha-beta TR is associated with the transmembrane signaling CD3 coreceptor proteins to form the TR-CD3 (TcR or TCR). The assembly of alpha-beta TR heterodimers with CD3 occurs in the endoplasmic reticulum where a single alpha-beta TR heterodimer associates with one CD3D-CD3E heterodimer, one CD3G-CD3E heterodimer and one CD247 homodimer forming a stable octameric structure. CD3D-CD3E and CD3G-CD3E heterodimers preferentially associate with TR alpha and TR beta chains, respectively. The association of the CD247 homodimer is the last step of TcR assembly in the endoplasmic reticulum and is required for transport to the cell surface.

Its subcellular location is the cell membrane. Its function is as follows. V region of the variable domain of T cell receptor (TR) alpha chain that participates in the antigen recognition. Alpha-beta T cell receptors are antigen specific receptors which are essential to the immune response and are present on the cell surface of T lymphocytes. Recognize peptide-major histocompatibility (MH) (pMH) complexes that are displayed by antigen presenting cells (APC), a prerequisite for efficient T cell adaptive immunity against pathogens. Binding of alpha-beta TR to pMH complex initiates TR-CD3 clustering on the cell surface and intracellular activation of LCK that phosphorylates the ITAM motifs of CD3G, CD3D, CD3E and CD247 enabling the recruitment of ZAP70. In turn ZAP70 phosphorylates LAT, which recruits numerous signaling molecules to form the LAT signalosome. The LAT signalosome propagates signal branching to three major signaling pathways, the calcium, the mitogen-activated protein kinase (MAPK) kinase and the nuclear factor NF-kappa-B (NF-kB) pathways, leading to the mobilization of transcription factors that are critical for gene expression and essential for T cell growth and differentiation. The T cell repertoire is generated in the thymus, by V-(D)-J rearrangement. This repertoire is then shaped by intrathymic selection events to generate a peripheral T cell pool of self-MH restricted, non-autoaggressive T cells. Post-thymic interaction of alpha-beta TR with the pMH complexes shapes TR structural and functional avidity. This Homo sapiens (Human) protein is T cell receptor alpha variable 17.